A 213-amino-acid polypeptide reads, in one-letter code: Phosphoenolpyruvate guanylyltransferase (213 aa).

Residues Thr-146, Gly-161, and Ser-164 each coordinate phosphoenolpyruvate.

It belongs to the CofC family.

The enzyme catalyses phosphoenolpyruvate + GTP + H(+) = enolpyruvoyl-2-diphospho-5'-guanosine + diphosphate. The protein operates within cofactor biosynthesis; coenzyme F420 biosynthesis. Its function is as follows. Guanylyltransferase that catalyzes the activation of phosphoenolpyruvate (PEP) as enolpyruvoyl-2-diphospho-5'-guanosine, via the condensation of PEP with GTP. It is involved in the biosynthesis of coenzyme F420, a hydride carrier cofactor. The protein is Phosphoenolpyruvate guanylyltransferase of Mycolicibacterium vanbaalenii (strain DSM 7251 / JCM 13017 / BCRC 16820 / KCTC 9966 / NRRL B-24157 / PYR-1) (Mycobacterium vanbaalenii).